The chain runs to 346 residues: N-acetyl-gamma-glutamyl-phosphate reductase (346 aa).

Residue C149 is part of the active site.

This sequence belongs to the NAGSA dehydrogenase family. Type 1 subfamily.

It is found in the cytoplasm. The catalysed reaction is N-acetyl-L-glutamate 5-semialdehyde + phosphate + NADP(+) = N-acetyl-L-glutamyl 5-phosphate + NADPH + H(+). The protein operates within amino-acid biosynthesis; L-arginine biosynthesis; N(2)-acetyl-L-ornithine from L-glutamate: step 3/4. Functionally, catalyzes the NADPH-dependent reduction of N-acetyl-5-glutamyl phosphate to yield N-acetyl-L-glutamate 5-semialdehyde. The chain is N-acetyl-gamma-glutamyl-phosphate reductase from Geobacter sulfurreducens (strain ATCC 51573 / DSM 12127 / PCA).